We begin with the raw amino-acid sequence, 586 residues long: A-type ATP synthase subunit A (586 aa).

232–239 lines the ATP pocket; the sequence is GPFGSGKT.

The protein belongs to the ATPase alpha/beta chains family. As to quaternary structure, has multiple subunits with at least A(3), B(3), C, D, E, F, H, I and proteolipid K(x).

It is found in the cell membrane. The catalysed reaction is ATP + H2O + 4 H(+)(in) = ADP + phosphate + 5 H(+)(out). Functionally, component of the A-type ATP synthase that produces ATP from ADP in the presence of a proton gradient across the membrane. The A chain is the catalytic subunit. The polypeptide is A-type ATP synthase subunit A (Methanococcus maripaludis (strain DSM 14266 / JCM 13030 / NBRC 101832 / S2 / LL)).